Consider the following 226-residue polypeptide: MDSAETDTPSTRSTPNGPGLRQRKLRRTRDQLIREALELFLAQGYEHTTVEQIAEAVEVHPRTFFRHFASKEEVALTPISAIDEAFLAALEVRPAGENPLQAMSGAFRAVLGRVRDGELEGVDGALHMAMMRLVERTPGLLAEYLRRSEEMEGRLARIIAAREGVDLDDDFRPRFIVAVFKAVGRVVSREWYLRADTDLEALSVAFESALDSLRPELFADWRRPGA.

Residues Met1–Asn16 show a composition bias toward polar residues. The tract at residues Met1 to Leu25 is disordered. Residues Arg26–Phe86 form the HTH tetR-type domain. A DNA-binding region (H-T-H motif) is located at residues Thr49–Phe68.

Its pathway is antibiotic biosynthesis; tetracenomycin C biosynthesis. Functionally, represses transcription of the divergently oriented tcmR and tcmA (tetracenomycin C resistance and export) genes by binding to an intergenic operator region. This binding is inhibited by tetracenomycin C. The polypeptide is HTH-type transcriptional regulator TcmR (tcmR) (Streptomyces glaucescens).